A 510-amino-acid polypeptide reads, in one-letter code: ETS translocation variant 5 (510 aa).

The interval 131–208 (FKPLTPPTTP…QPLQMPKMMP (78 aa)) is disordered. The span at 161–174 (GHAPAAGPVQGVGP) shows a compositional bias: low complexity. Residues 175–185 (APAPHSLPEPG) are compositionally biased toward pro residues. Ser-248 is modified (phosphoserine). Lys-350 participates in a covalent cross-link: Glycyl lysine isopeptide (Lys-Gly) (interchain with G-Cter in SUMO2). The segment at residues 368–448 (LQLWQFLVTL…AGERYVYKFV (81 aa)) is a DNA-binding region (ETS).

In terms of assembly, interacts (via C-terminal) with ZMYM5 (via N-terminal 120 amino acid region). Ubiquitous.

The protein resides in the nucleus. Binds to DNA sequences containing the consensus nucleotide core sequence 5'-GGAA.-3'. In Homo sapiens (Human), this protein is ETS translocation variant 5 (ETV5).